The primary structure comprises 405 residues: Acetate kinase (405 aa).

Asn13 contributes to the Mg(2+) binding site. Position 20 (Lys20) interacts with ATP. Arg94 contributes to the substrate binding site. The active-site Proton donor/acceptor is the Asp153. ATP-binding positions include 213–217 (HLGNG), 288–290 (DFR), and 336–340 (GIGEN). A Mg(2+)-binding site is contributed by Glu390.

Belongs to the acetokinase family. As to quaternary structure, homodimer. Mg(2+) is required as a cofactor. The cofactor is Mn(2+).

The protein resides in the cytoplasm. It catalyses the reaction acetate + ATP = acetyl phosphate + ADP. It participates in metabolic intermediate biosynthesis; acetyl-CoA biosynthesis; acetyl-CoA from acetate: step 1/2. Its function is as follows. Catalyzes the formation of acetyl phosphate from acetate and ATP. Can also catalyze the reverse reaction. In Buchnera aphidicola subsp. Acyrthosiphon pisum (strain APS) (Acyrthosiphon pisum symbiotic bacterium), this protein is Acetate kinase.